The chain runs to 357 residues: Alpha-2-macroglobulin receptor-associated protein (357 aa).

Residues 1-34 form the signal peptide; it reads MAPRRVRSFLRGLPALLLLLLFLGPWPAASHGGK. The tract at residues 32-52 is disordered; it reads GGKYSREKNQPKPSPKRESGE. The segment covering 35–52 has biased composition (basic and acidic residues); the sequence is YSREKNQPKPSPKRESGE. Phosphoserine is present on residues S50 and S135. The stretch at 219–310 forms a coiled coil; that stretch reads SRHTELKEKL…AHEKLRHAES (92 aa). Residues 237–353 are LDL receptor binding; that stretch reads RLRRVSHQGY…DLSGRISRAR (117 aa). Position 248 is a phosphothreonine (T248). An N-linked (GlcNAc...) asparagine glycan is attached at N268. The Prevents secretion from ER signature appears at 354–357; that stretch reads HNEL.

It belongs to the alpha-2-MRAP family. Interacts with the LRP1/alpha-2-macroglobulin receptor heavy and light chains; the interaction is transient and coincides with a reduction of ligand binding by the receptor. Interacts with LRP2/glycoprotein 330. Interacts with LRP1B; binding is followed by internalization and degradation. Interacts with LDLR. Interacts with SORL1. Interacts with LRP1; this interaction is followed by rapid internalization. Post-translationally, N-glycosylated.

It localises to the rough endoplasmic reticulum lumen. It is found in the endoplasmic reticulum-Golgi intermediate compartment lumen. The protein resides in the golgi apparatus. The protein localises to the cis-Golgi network. Its subcellular location is the golgi apparatus lumen. It localises to the endosome lumen. It is found in the cell surface. In terms of biological role, molecular chaperone for LDL receptor-related proteins that may regulate their ligand binding activity along the secretory pathway. This Homo sapiens (Human) protein is Alpha-2-macroglobulin receptor-associated protein.